Here is a 64-residue protein sequence, read N- to C-terminus: Beta-toxin Tf1 (64 aa).

The LCN-type CS-alpha/beta domain occupies 1–62 (KEGYLMDHEG…VWERATNRCG (62 aa)). 4 cysteine pairs are disulfide-bonded: cysteine 11-cysteine 61, cysteine 15-cysteine 37, cysteine 23-cysteine 42, and cysteine 27-cysteine 44. Cysteine 61 is subject to Cysteine amide.

This sequence belongs to the long (4 C-C) scorpion toxin superfamily. Sodium channel inhibitor family. Beta subfamily. Expressed by the venom gland.

Its subcellular location is the secreted. In terms of biological role, beta toxins bind voltage-independently at site-4 of sodium channels (Nav) and shift the voltage of activation toward more negative potentials thereby affecting sodium channel activation and promoting spontaneous and repetitive firing. This Tityus fasciolatus (Central Brazilian scorpion) protein is Beta-toxin Tf1.